The following is a 779-amino-acid chain: Acyl-CoA dehydrogenase family member 11 (779 aa).

An N6-acetyllysine modification is found at Lys-175. Phosphoserine is present on Ser-210. A Phosphotyrosine modification is found at Tyr-323. N6-succinyllysine is present on residues Lys-368 and Lys-390. FAD-binding positions include 503–513 (FCMTEPNVSSS), 511–513 (SSS), 537–539 (WSS), and Ser-539. Ser-513 lines the substrate pocket. Residue 628–631 (GPGR) participates in substrate binding. Residues Arg-656, Gln-726, and 726 to 730 (QVHGG) contribute to the FAD site. Gly-754 serves as a coordination point for substrate. Residues 755–757 (PDE) and Glu-757 contribute to the FAD site. An N6-acetyllysine modification is found at Lys-765.

This sequence belongs to the acyl-CoA dehydrogenase family. As to quaternary structure, homodimer. Requires FAD as cofactor.

It localises to the peroxisome. It is found in the mitochondrion membrane. The enzyme catalyses a 2,3-saturated acyl-CoA + oxidized [electron-transfer flavoprotein] + H(+) = a (2E)-enoyl-CoA + reduced [electron-transfer flavoprotein]. The catalysed reaction is docosanoyl-CoA + oxidized [electron-transfer flavoprotein] + H(+) = (2E)-docosenoyl-CoA + reduced [electron-transfer flavoprotein]. It carries out the reaction tetracosanoyl-CoA + oxidized [electron-transfer flavoprotein] + H(+) = (2E)-tetracosenoyl-CoA + reduced [electron-transfer flavoprotein]. It catalyses the reaction eicosanoyl-CoA + oxidized [electron-transfer flavoprotein] + H(+) = (2E)-eicosenoyl-CoA + reduced [electron-transfer flavoprotein]. The enzyme catalyses hexacosanoyl-CoA + oxidized [electron-transfer flavoprotein] + H(+) = (2E)-hexacosenoyl-CoA + reduced [electron-transfer flavoprotein]. The catalysed reaction is tricosanoyl-CoA + oxidized [electron-transfer flavoprotein] + H(+) = (2E)-tricosenoyl-CoA + reduced [electron-transfer flavoprotein]. Its pathway is lipid metabolism; fatty acid beta-oxidation. Its function is as follows. Acyl-CoA dehydrogenase, that exhibits maximal activity towards saturated C22-CoA. Probably participates in beta-oxydation and energy production but could also play a role in the metabolism of specific fatty acids to control fatty acids composition of cellular lipids in brain. This is Acyl-CoA dehydrogenase family member 11 (Acad11) from Rattus norvegicus (Rat).